Reading from the N-terminus, the 50-residue chain is Small ribosomal subunit protein uS14 (50 aa).

Residues Cys-15, Cys-18, Cys-33, and Cys-36 each contribute to the Zn(2+) site.

This sequence belongs to the universal ribosomal protein uS14 family. Zinc-binding uS14 subfamily. As to quaternary structure, part of the 30S ribosomal subunit. The cofactor is Zn(2+).

In terms of biological role, binds 16S rRNA, required for the assembly of 30S particles. This is Small ribosomal subunit protein uS14 from Methanothermobacter thermautotrophicus (strain ATCC 29096 / DSM 1053 / JCM 10044 / NBRC 100330 / Delta H) (Methanobacterium thermoautotrophicum).